Here is a 949-residue protein sequence, read N- to C-terminus: MAM domain-containing glycosylphosphatidylinositol anchor protein 1 (949 aa).

A signal peptide spans 1-18 (MEMICVLFLSLVPAYSRG). Ig-like domains are found at residues 24 to 125 (PAQA…IRVD) and 132 to 230 (PVLT…KSIT). N-linked (GlcNAc...) asparagine glycosylation is found at asparagine 42 and asparagine 90. Disulfide bonds link cysteine 60–cysteine 108 and cysteine 157–cysteine 214. N-linked (GlcNAc...) asparagine glycans are attached at residues asparagine 235, asparagine 247, asparagine 257, asparagine 292, asparagine 307, and asparagine 331. One can recognise an Ig-like 3 domain in the interval 240-323 (PALKLSVNET…VGNPAKKTVN (84 aa)). Cysteine 262 and cysteine 308 are disulfide-bonded. 3 consecutive Ig-like domains span residues 338–432 (PDVI…VEVN), 440–531 (PTIS…ALVQ), and 537–625 (PPVV…FQVS). Cysteines 357 and 415 form a disulfide. The N-linked (GlcNAc...) asparagine glycan is linked to asparagine 432. 2 disulfide bridges follow: cysteine 463/cysteine 513 and cysteine 559/cysteine 609. Asparagine 577, asparagine 649, and asparagine 820 each carry an N-linked (GlcNAc...) asparagine glycan. Residues 637 to 737 (TPNPTLSQKQ…ARIIRYMEPI (101 aa)) form the Fibronectin type-III domain. The MAM domain maps to 745–912 (NTCRFEDEKI…VTLKKGDCPR (168 aa)). Serine 926 carries the GPI-anchor amidated serine lipid modification. The propeptide at 927–949 (GVSAQHGPCLCGPLTFFLYVLLR) is removed in mature form.

As to quaternary structure, interacts heterophilically through its MAM domain with proteins in axon-rich regions and through its Ig-like domains with proteins in differentiating muscle. In the embryonic brachial spinal cord, selectively expressed by medial lateral motor column neurons, some populations of dorsal root ganglion neurons, and interneurons.

The protein localises to the cell membrane. Its function is as follows. Required for radial migration of cortical neurons in the superficial layer of the neocortex. The protein is MAM domain-containing glycosylphosphatidylinositol anchor protein 1 of Gallus gallus (Chicken).